The primary structure comprises 413 residues: Serpin A12 (413 aa).

The signal sequence occupies residues 1-20 (MTRMLDLGLFLAGLLTVKGL). Residues Asn-92 and Asn-267 are each glycosylated (N-linked (GlcNAc...) asparagine). The interval 364 to 382 (GMEGAAGSGAQTLPMETPR) is reactive center loop.

It belongs to the serpin family. As to quaternary structure, forms a stable complex with KLK7. Post-translationally, glycosylation slightly decreases affinity for heparin, but otherwise has no significant effect on KLK7 inhibitory activity or thermal stability of the protein. As to expression, expressed in visceral adipose tissues.

It is found in the secreted. Its activity is regulated as follows. Inhibition of KLK7 is enhanced by heparin. Adipokine that modulates insulin action by specifically inhibiting its target protease KLK7 in white adipose tissues. The polypeptide is Serpin A12 (Serpina12) (Mus musculus (Mouse)).